Here is a 360-residue protein sequence, read N- to C-terminus: Phosphoserine aminotransferase (360 aa).

Arg-41 is an L-glutamate binding site. Pyridoxal 5'-phosphate is bound by residues Trp-101, Thr-152, Asp-172, and Gln-195. Lys-196 carries the N6-(pyridoxal phosphate)lysine modification. 237-238 (NT) serves as a coordination point for pyridoxal 5'-phosphate.

The protein belongs to the class-V pyridoxal-phosphate-dependent aminotransferase family. SerC subfamily. As to quaternary structure, homodimer. The cofactor is pyridoxal 5'-phosphate.

The protein resides in the cytoplasm. It carries out the reaction O-phospho-L-serine + 2-oxoglutarate = 3-phosphooxypyruvate + L-glutamate. It catalyses the reaction 4-(phosphooxy)-L-threonine + 2-oxoglutarate = (R)-3-hydroxy-2-oxo-4-phosphooxybutanoate + L-glutamate. It functions in the pathway amino-acid biosynthesis; L-serine biosynthesis; L-serine from 3-phospho-D-glycerate: step 2/3. The protein operates within cofactor biosynthesis; pyridoxine 5'-phosphate biosynthesis; pyridoxine 5'-phosphate from D-erythrose 4-phosphate: step 3/5. Its function is as follows. Catalyzes the reversible conversion of 3-phosphohydroxypyruvate to phosphoserine and of 3-hydroxy-2-oxo-4-phosphonooxybutanoate to phosphohydroxythreonine. This chain is Phosphoserine aminotransferase, found in Burkholderia cenocepacia (strain HI2424).